The following is a 364-amino-acid chain: Mitogen-activated protein kinase 11 (364 aa).

A Protein kinase domain is found at 24–308 (LQGLRPVGSG…AAEALAHAYF (285 aa)). Residues 30 to 38 (VGSGAYGSV) and K53 contribute to the ATP site. E71 lines the nilotinib pocket. Residue D150 is the Proton acceptor of the active site. At T180 the chain carries Phosphothreonine; by MAP2K3, MAP2K4 and MAP2K6. The short motif at 180 to 182 (TGY) is the TXY element. Y182 carries the phosphotyrosine; by MAP2K3, MAP2K4 and MAP2K6 modification. Disordered regions lie at residues 311–331 (YHDPEDEPEAEPYDESVEAKE) and 343–364 (QEVLSFKPPEPPKPPGSLEIEQ). Residues 314-326 (PEDEPEAEPYDES) are compositionally biased toward acidic residues. Residue Y323 is modified to Phosphotyrosine; by ZAP70.

The protein belongs to the protein kinase superfamily. CMGC Ser/Thr protein kinase family. MAP kinase subfamily. In terms of assembly, interacts with HDAC3 and DUSP16. Mg(2+) is required as a cofactor. Post-translationally, dually phosphorylated on Thr-180 and Tyr-182 by MAP2K3/MKK3, MAP2K4/MKK4 and MAP2K6/MKK6, which activates the enzyme. In terms of tissue distribution, highest levels in the brain and heart. Also expressed in the placenta, lung, liver, skeletal muscle, kidney and pancreas.

Its subcellular location is the cytoplasm. The protein resides in the nucleus. It carries out the reaction L-seryl-[protein] + ATP = O-phospho-L-seryl-[protein] + ADP + H(+). It catalyses the reaction L-threonyl-[protein] + ATP = O-phospho-L-threonyl-[protein] + ADP + H(+). Its activity is regulated as follows. Activated by phosphorylation on threonine and tyrosine by MAP2K3/MKK3, MAP2K4/MKK4 and MAP2K6/MKK6. MAP2K3/MKK3 and MAP2K6/MKK6 are both essential for the activation of MAPK11 induced by environmental stress. HDAC3 interacts directly and selectively with MAPK11 to repress ATF2 transcriptional activity, and regulate TNF gene expression in LPS-stimulated cells. Inhibited by SB203580 and pyridinyl-imidazole related compounds. In terms of biological role, serine/threonine kinase which acts as an essential component of the MAP kinase signal transduction pathway. MAPK11 is one of the four p38 MAPKs which play an important role in the cascades of cellular responses evoked by extracellular stimuli such as pro-inflammatory cytokines or physical stress leading to direct activation of transcription factors. Accordingly, p38 MAPKs phosphorylate a broad range of proteins and it has been estimated that they may have approximately 200 to 300 substrates each. MAPK11 functions are mostly redundant with those of MAPK14. Some of the targets are downstream kinases which are activated through phosphorylation and further phosphorylate additional targets. RPS6KA5/MSK1 and RPS6KA4/MSK2 can directly phosphorylate and activate transcription factors such as CREB1, ATF1, the NF-kappa-B isoform RELA/NFKB3, STAT1 and STAT3, but can also phosphorylate histone H3 and the nucleosomal protein HMGN1. RPS6KA5/MSK1 and RPS6KA4/MSK2 play important roles in the rapid induction of immediate-early genes in response to stress or mitogenic stimuli, either by inducing chromatin remodeling or by recruiting the transcription machinery. On the other hand, two other kinase targets, MAPKAPK2/MK2 and MAPKAPK3/MK3, participate in the control of gene expression mostly at the post-transcriptional level, by phosphorylating ZFP36 (tristetraprolin) and ELAVL1, and by regulating EEF2K, which is important for the elongation of mRNA during translation. MKNK1/MNK1 and MKNK2/MNK2, two other kinases activated by p38 MAPKs, regulate protein synthesis by phosphorylating the initiation factor EIF4E2. In the cytoplasm, the p38 MAPK pathway is an important regulator of protein turnover. For example, CFLAR is an inhibitor of TNF-induced apoptosis whose proteasome-mediated degradation is regulated by p38 MAPK phosphorylation. Ectodomain shedding of transmembrane proteins is regulated by p38 MAPKs as well. In response to inflammatory stimuli, p38 MAPKs phosphorylate the membrane-associated metalloprotease ADAM17. Such phosphorylation is required for ADAM17-mediated ectodomain shedding of TGF-alpha family ligands, which results in the activation of EGFR signaling and cell proliferation. Additional examples of p38 MAPK substrates are the FGFR1. FGFR1 can be translocated from the extracellular space into the cytosol and nucleus of target cells, and regulates processes such as rRNA synthesis and cell growth. FGFR1 translocation requires p38 MAPK activation. In the nucleus, many transcription factors are phosphorylated and activated by p38 MAPKs in response to different stimuli. Classical examples include ATF1, ATF2, ATF6, ELK1, PTPRH, DDIT3, TP53/p53 and MEF2C and MEF2A. The p38 MAPKs are emerging as important modulators of gene expression by regulating chromatin modifiers and remodelers. The promoters of several genes involved in the inflammatory response, such as IL6, IL8 and IL12B, display a p38 MAPK-dependent enrichment of histone H3 phosphorylation on 'Ser-10' (H3S10ph) in LPS-stimulated myeloid cells. This phosphorylation enhances the accessibility of the cryptic NF-kappa-B-binding sites marking promoters for increased NF-kappa-B recruitment. Phosphorylates NLRP1 downstream of MAP3K20/ZAK in response to UV-B irradiation and ribosome collisions, promoting activation of the NLRP1 inflammasome and pyroptosis. Phosphorylates methyltransferase DOT1L on 'Ser-834', 'Thr-900', 'Ser-902', 'Thr-984', 'Ser-1001', 'Ser-1009' and 'Ser-1104'. The protein is Mitogen-activated protein kinase 11 (MAPK11) of Homo sapiens (Human).